We begin with the raw amino-acid sequence, 566 residues long: Mitochondrial distribution and morphology protein 34 (566 aa).

One can recognise an SMP-LTD domain in the interval 1–195 (MAFNFNWSPL…LPAIIHRLSL (195 aa)). 4 disordered regions span residues 212–237 (PEQT…DSLG), 349–401 (GYGL…NPSV), 432–518 (PERR…SSST), and 539–566 (KLMP…AYGQ). Residues 358–370 (RHSKAHSRKRKKR) are compositionally biased toward basic residues. A compositionally biased stretch (polar residues) spans 380 to 401 (TSDTASVSDESAYTETASNPSV). A compositionally biased stretch (basic and acidic residues) spans 444–454 (PRRDIATEMLR).

The protein belongs to the MDM34 family. As to quaternary structure, component of the ER-mitochondria encounter structure (ERMES) or MDM complex, composed of mmm1, mdm10, mdm12 and mdm34.

The protein resides in the mitochondrion outer membrane. Component of the ERMES/MDM complex, which serves as a molecular tether to connect the endoplasmic reticulum (ER) and mitochondria. Components of this complex are involved in the control of mitochondrial shape and protein biogenesis, and function in nonvesicular lipid trafficking between the ER and mitochondria. Mdm34 is required for the interaction of the ER-resident membrane protein mmm1 and the outer mitochondrial membrane-resident beta-barrel protein mdm10. This is Mitochondrial distribution and morphology protein 34 from Aspergillus flavus (strain ATCC 200026 / FGSC A1120 / IAM 13836 / NRRL 3357 / JCM 12722 / SRRC 167).